A 323-amino-acid polypeptide reads, in one-letter code: D-alanine--D-alanine ligase (323 aa).

Residues 102–300 (KQIFRAEGIP…FTELVERMLQ (199 aa)) form the ATP-grasp domain. 130 to 185 (VARLGSPLVVKPSNSGSTVGISLARDEVSLAQGLALASSVSSRVFLERYIPGKEIT) contacts ATP. Mg(2+) is bound by residues aspartate 254, glutamate 267, and asparagine 269.

This sequence belongs to the D-alanine--D-alanine ligase family. Requires Mg(2+) as cofactor. It depends on Mn(2+) as a cofactor.

It localises to the cytoplasm. It catalyses the reaction 2 D-alanine + ATP = D-alanyl-D-alanine + ADP + phosphate + H(+). Its pathway is cell wall biogenesis; peptidoglycan biosynthesis. Functionally, cell wall formation. In Synechococcus sp. (strain JA-3-3Ab) (Cyanobacteria bacterium Yellowstone A-Prime), this protein is D-alanine--D-alanine ligase.